Consider the following 285-residue polypeptide: Formamidopyrimidine-DNA glycosylase (285 aa).

The active-site Schiff-base intermediate with DNA is the P2. E3 serves as the catalytic Proton donor. K61 acts as the Proton donor; for beta-elimination activity in catalysis. The DNA site is built by H102, R121, and K163. The FPG-type zinc finger occupies N249–K283. The active-site Proton donor; for delta-elimination activity is R273.

Belongs to the FPG family. In terms of assembly, monomer. Requires Zn(2+) as cofactor.

The enzyme catalyses Hydrolysis of DNA containing ring-opened 7-methylguanine residues, releasing 2,6-diamino-4-hydroxy-5-(N-methyl)formamidopyrimidine.. It catalyses the reaction 2'-deoxyribonucleotide-(2'-deoxyribose 5'-phosphate)-2'-deoxyribonucleotide-DNA = a 3'-end 2'-deoxyribonucleotide-(2,3-dehydro-2,3-deoxyribose 5'-phosphate)-DNA + a 5'-end 5'-phospho-2'-deoxyribonucleoside-DNA + H(+). Functionally, involved in base excision repair of DNA damaged by oxidation or by mutagenic agents. Acts as a DNA glycosylase that recognizes and removes damaged bases. Has a preference for oxidized purines, such as 7,8-dihydro-8-oxoguanine (8-oxoG). Has AP (apurinic/apyrimidinic) lyase activity and introduces nicks in the DNA strand. Cleaves the DNA backbone by beta-delta elimination to generate a single-strand break at the site of the removed base with both 3'- and 5'-phosphates. This chain is Formamidopyrimidine-DNA glycosylase, found in Corynebacterium efficiens (strain DSM 44549 / YS-314 / AJ 12310 / JCM 11189 / NBRC 100395).